The following is a 294-amino-acid chain: Foldase protein PrsA 1 (294 aa).

Positions 1–21 (MTKLKKVMISLVAATLLLLAG) are cleaved as a signal peptide. The N-palmitoyl cysteine moiety is linked to residue Cys-22. Cys-22 is lipidated: S-diacylglycerol cysteine. In terms of domain architecture, PpiC spans 135–226 (EPNITVRHIL…YGYHLIQLVK (92 aa)).

The protein belongs to the PrsA family.

It is found in the cell membrane. It catalyses the reaction [protein]-peptidylproline (omega=180) = [protein]-peptidylproline (omega=0). In terms of biological role, plays a major role in protein secretion by helping the post-translocational extracellular folding of several secreted proteins. The polypeptide is Foldase protein PrsA 1 (prsA1) (Listeria innocua serovar 6a (strain ATCC BAA-680 / CLIP 11262)).